The chain runs to 323 residues: Fructose-1,6-bisphosphatase class 1 (323 aa).

Residues Glu88, Asp107, Leu109, and Asp110 each contribute to the Mg(2+) site. Substrate-binding positions include 110–113 (DGSS) and Asn200. Glu272 is a binding site for Mg(2+).

It belongs to the FBPase class 1 family. Homotetramer. Mg(2+) serves as cofactor.

Its subcellular location is the cytoplasm. It catalyses the reaction beta-D-fructose 1,6-bisphosphate + H2O = beta-D-fructose 6-phosphate + phosphate. It functions in the pathway carbohydrate biosynthesis; gluconeogenesis. This chain is Fructose-1,6-bisphosphatase class 1, found in Acinetobacter baylyi (strain ATCC 33305 / BD413 / ADP1).